Reading from the N-terminus, the 475-residue chain is U3 small nucleolar RNA-interacting protein 2 (475 aa).

The tract at residues 1 to 75 (MSATAAARKR…EEEEELEETA (75 aa)) is disordered. The Nuclear localization signal signature appears at 8 to 40 (RKRGKPASGAGAGAGAGKRRRKADSAGDRGKSK). Arg10 is modified (omega-N-methylarginine). N6-acetyllysine occurs at positions 12 and 25. 4 positions are modified to phosphoserine: Ser50, Ser51, Ser53, and Ser57. The segment covering 65-74 (EEEEEELEET) has biased composition (acidic residues). Lys113 is covalently cross-linked (Glycyl lysine isopeptide (Lys-Gly) (interchain with G-Cter in SUMO2)). WD repeat units lie at residues 144 to 183 (GHQL…KLHV), 197 to 236 (GHSS…HLYT), 239 to 278 (GHRD…YVET), 281 to 320 (GHQD…QLVF), 322 to 360 (GHQG…PLAL), 374 to 413 (EQPF…RQLD), and 419 to 460 (PLVG…NSVC).

Belongs to the WD repeat RRP9 family. In terms of assembly, interacts specifically with the U3 small nucleolar RNA (U3 snoRNA). Binds a sub-fragment of the U3 snoRNA surrounding the B/C motif (3UBC). This association with the U3BC RNA is dependent on the binding of a protein called 15.5K to the box B/C motif. The association of the protein with the U3BC RNA was found to be also dependent on a conserved RNA structure that flanks the box B/C motif. Part of the small subunit (SSU) processome, composed of more than 70 proteins and the RNA chaperone small nucleolar RNA (snoRNA) U3. Acetylation at Lys-12 and Lys-25 by KAT2B/PCAF under stress impairs pre-rRNA processing. Deacetylation by SIRT7 enhances RRP9-binding to U3 snoRNA, which is a prerequisite for pre-rRNA processing.

The protein localises to the nucleus. The protein resides in the nucleolus. Functionally, component of a nucleolar small nuclear ribonucleoprotein particle (snoRNP) thought to participate in the processing and modification of pre-ribosomal RNA (pre-rRNA). Part of the small subunit (SSU) processome, first precursor of the small eukaryotic ribosomal subunit. During the assembly of the SSU processome in the nucleolus, many ribosome biogenesis factors, an RNA chaperone and ribosomal proteins associate with the nascent pre-rRNA and work in concert to generate RNA folding, modifications, rearrangements and cleavage as well as targeted degradation of pre-ribosomal RNA by the RNA exosome. This is U3 small nucleolar RNA-interacting protein 2 from Homo sapiens (Human).